A 38-amino-acid chain; its full sequence is Photosystem II reaction center protein L (38 aa).

The helical transmembrane segment at 17 to 37 threads the bilayer; it reads SLFIGLLLVLVLALLFSSYFF.

It belongs to the PsbL family. As to quaternary structure, PSII is composed of 1 copy each of membrane proteins PsbA, PsbB, PsbC, PsbD, PsbE, PsbF, PsbH, PsbI, PsbJ, PsbK, PsbL, PsbM, PsbT, PsbX, PsbY, PsbZ, Psb30/Ycf12, peripheral proteins PsbO, CyanoQ (PsbQ), PsbU, PsbV and a large number of cofactors. It forms dimeric complexes.

It is found in the cellular thylakoid membrane. Its function is as follows. One of the components of the core complex of photosystem II (PSII). PSII is a light-driven water:plastoquinone oxidoreductase that uses light energy to abstract electrons from H(2)O, generating O(2) and a proton gradient subsequently used for ATP formation. It consists of a core antenna complex that captures photons, and an electron transfer chain that converts photonic excitation into a charge separation. This subunit is found at the monomer-monomer interface and is required for correct PSII assembly and/or dimerization. The sequence is that of Photosystem II reaction center protein L from Acaryochloris marina (strain MBIC 11017).